Here is a 401-residue protein sequence, read N- to C-terminus: Argininosuccinate synthase (401 aa).

8–16 (AYSGGLDTS) serves as a coordination point for ATP. Y85 contributes to the L-citrulline binding site. Position 115 (G115) interacts with ATP. T117, N121, and D122 together coordinate L-aspartate. N121 serves as a coordination point for L-citrulline. The L-citrulline site is built by R125, S173, E258, and Y270.

It belongs to the argininosuccinate synthase family. Type 1 subfamily. As to quaternary structure, homotetramer.

Its subcellular location is the cytoplasm. The catalysed reaction is L-citrulline + L-aspartate + ATP = 2-(N(omega)-L-arginino)succinate + AMP + diphosphate + H(+). It participates in amino-acid biosynthesis; L-arginine biosynthesis; L-arginine from L-ornithine and carbamoyl phosphate: step 2/3. In Staphylococcus carnosus (strain TM300), this protein is Argininosuccinate synthase.